The following is a 685-amino-acid chain: uncharacterized protein (685 aa).

2 disordered regions span residues 502–538 (NLNQ…SLNK) and 635–685 (RSKR…IHNA). A compositionally biased stretch (polar residues) spans 518–538 (SSENMTKFPSSRGKSTVSLNK). A compositionally biased stretch (basic residues) spans 675 to 685 (KLKKSLIIHNA).

This is an uncharacterized protein from Homo sapiens (Human).